The primary structure comprises 141 residues: UPF0310 protein SGO_1818 (141 aa).

This sequence belongs to the UPF0310 family.

This Streptococcus gordonii (strain Challis / ATCC 35105 / BCRC 15272 / CH1 / DL1 / V288) protein is UPF0310 protein SGO_1818.